The chain runs to 41 residues: Photosystem I reaction center subunit IX (41 aa).

The chain crosses the membrane as a helical span at residues 7-27 (YLSTAPVLTLVSLTAVAGLLI).

It belongs to the PsaJ family.

Its subcellular location is the plastid. The protein localises to the chloroplast thylakoid membrane. In terms of biological role, may help in the organization of the PsaE and PsaF subunits. This is Photosystem I reaction center subunit IX from Chlorella vulgaris (Green alga).